The sequence spans 444 residues: Phosphoglucosamine mutase (444 aa).

Ser102 (phosphoserine intermediate) is an active-site residue. Mg(2+) is bound by residues Ser102, Asp241, Asp243, and Asp245. Residue Ser102 is modified to Phosphoserine.

Belongs to the phosphohexose mutase family. Mg(2+) serves as cofactor. Activated by phosphorylation.

The catalysed reaction is alpha-D-glucosamine 1-phosphate = D-glucosamine 6-phosphate. Functionally, catalyzes the conversion of glucosamine-6-phosphate to glucosamine-1-phosphate. In Acidovorax sp. (strain JS42), this protein is Phosphoglucosamine mutase.